We begin with the raw amino-acid sequence, 86 residues long: Small ribosomal subunit protein bS16 (86 aa).

This sequence belongs to the bacterial ribosomal protein bS16 family.

The chain is Small ribosomal subunit protein bS16 from Xylella fastidiosa (strain M12).